The sequence spans 234 residues: MSETWEALRKKARSTENSIDVKLVSLNKLTASSHGGFDIDEKTVSSRQTSFKTVTTEIEGLIEQLTNINDDMNDVAGAQSSASWANNPAIQHTLRRHREILRDYGSEYRRARDNVDQVLQRELLLSSSNENRNNPILNNRARGYDMYLKENDHINACDRLLDEQLEMAMSTKENMARQGINLRGISTRLHHISKKYPAINNLMQKIKTKKQKNTLILAAVISSCLIFTIFWIIN.

Residues 1–212 are Cytoplasmic-facing; the sequence is MSETWEALRK…MQKIKTKKQK (212 aa). Residues 54-121 adopt a coiled-coil conformation; the sequence is VTTEIEGLIE…RDNVDQVLQR (68 aa). Residues 213–233 traverse the membrane as a helical; Anchor for type IV membrane protein segment; it reads NTLILAAVISSCLIFTIFWII. Position 234 (asparagine 234) is a topological domain, vesicular.

Belongs to the GOSR1 family. Component of several multiprotein Golgi SNARE complexes.

It is found in the golgi apparatus membrane. In terms of biological role, involved in transport from the ER to the Golgi apparatus as well as in intra-Golgi transport. It belongs to a super-family of proteins called t-SNAREs or soluble NSF (N-ethylmaleimide-sensitive factor) attachment protein receptor. Cooperates with ykt-6 for proper expression of Golgi-resident proteins. Required along with ykt-6 for normal embryonic development, seam cell division or differentiation, and ray formation. The polypeptide is Golgi SNAP receptor complex member 1 (gos-28) (Caenorhabditis elegans).